Here is a 399-residue protein sequence, read N- to C-terminus: uncharacterized protein (399 aa).

A disordered region spans residues 254 to 335 (SRVSTGDTSP…FFRDSDDDGD (82 aa)). Polar residues predominate over residues 255–264 (RVSTGDTSPY). The span at 310-329 (RNAEMKKSHSANDSEEFFRD) shows a compositional bias: basic and acidic residues.

This is an uncharacterized protein from Xenopus laevis (African clawed frog).